We begin with the raw amino-acid sequence, 1276 residues long: MSNQQQQQQQQQQPRQHPQPHPHHHHHHLHHHHQQQPGQHSEFPLPEGWDIARDFDGKTYYIDHINKKTTWLDPRDRYTKPQSFEDCVGDELPVGWEEAYDSNIGRYYINHIAQSTQLEDPRQEWKSVQEQMLSDYLSAAQDQLENKREMYDVKQQRLNLAQEEYNHLNKLAASRSSLCSSSSSMSRHDPELLRADLMLARERVRQLKQELTHITNDISYTERGMNTLYSVGEKINARKNGCYDIAEVQAIREEMLKVHKSLVSGEKVREELMRSLVQIKNELSRQQINEENAELMSAASPFDRVCVASQTDLCGAGEHLNGGARFAEMAKTKLQYAEWRKHIKKLQQQLADHVERIEPGQLESDKDRILLIQEKEKLLNDLNSISLKSRSAEEKQVIQQTRHKLEEDLKEAYEATNTCIANRLRFHEEKQLLLDKLQEALKSTKLLEERLKSFSSESTFSISSGSSLGSLSTASSKSALSFTDIYIDPFAVGESPIDVVDLQRRSQRLFQQHQRLPPVHPALQQQQQTQPLASSEVSLSPRSSLSMETPPASPMKYNAVADQPQAQAKLKEEPTYANALPALPTIPAPPAYAAPPAIPLALAAVRAHPYDLDSTVLDCMMLEAKLQKLNLGSPLNLNGPLSPISEKPSLLDLPQEMLSRSSSTSNTRSVSAAVSNESVAGDSGVFEASRAHLPRKELAQVQIGLKYLKQEGVLVVSLERANNLSALWTATTDNSQVYLRAALLPNSLTSIRTKALSDFQKPVFNDTFAVPISLDKLLTKSLQVTVVSMTGQKEEIIGTVQISMAEFNPEDSTLKWYNVLSSKFIPSFESLDLPSTSAAAAAAAVAASNSNNNNSNTNNREESSDESTITSSQTSTLTRNQAPPLELQAQIAEELPEHVRHNEQQCSDDDDDDDEEEDEQQLVGTLGLTHSGCMLDAYLENMKQEYADKETNTDCAFPPEKLRSQSQLLDDRPVKRSQTFTPSAAVSKNRYNCRLNRSDSDSAMHFGVTPHTFHRGAVERRSLRFQPKATKSVTKLHHNHIPRTSLDLELDLQAQHSKLFFLNDQISKLQNLKEVLQKACDNKDPLIAAWAIENEEFQRLVARADPAKFPEERLLQKLLMKTTKEIHKLRKTKVPKGAPDLVSFKEKISFFTRKGMSVPELPIEFMHPDADAIEEEEEDDNDDEEDNVVETAIAINTALVASSNRNKNLSEHHHRSTDGALSKLAATLTPAINPAPVSAPIPVAVSVPVAAPLADEAKPEQQRYDYVVDRNYGVEV.

The span at 1–16 (MSNQQQQQQQQQQPRQ) shows a compositional bias: low complexity. Residues 1–47 (MSNQQQQQQQQQQPRQHPQPHPHHHHHHLHHHHQQQPGQHSEFPLPE) form a disordered region. A compositionally biased stretch (basic residues) spans 18-34 (PQPHPHHHHHHLHHHHQ). WW domains lie at 43 to 76 (FPLP…DPRD) and 90 to 123 (DELP…DPRQ). Coiled coils occupy residues 137–219 (LSAA…NDIS), 266–298 (EKVR…LMSA), and 327–455 (AEMA…KSFS). Residues 521-554 (PALQQQQQTQPLASSEVSLSPRSSLSMETPPASP) form a disordered region. The segment covering 524–546 (QQQQQTQPLASSEVSLSPRSSLS) has biased composition (low complexity). The 121-residue stretch at 697–817 (ELAQVQIGLK…NPEDSTLKWY (121 aa)) folds into the C2 domain. Low complexity-rich tracts occupy residues 847-858 (ASNSNNNNSNTN) and 866-878 (ESTI…STLT). Disordered stretches follow at residues 847-882 (ASNS…RNQA), 898-921 (HVRH…DEQQ), and 950-980 (ETNT…SQTF). Residues 906 to 920 (CSDDDDDDDEEEDEQ) show a composition bias toward acidic residues.

This sequence belongs to the WWC family. KIBRA subfamily. In terms of assembly, forms a complex with Mer and Ex. Interacts (via domain WW 1) with Ex (via RXPPXY motif). Interacts with Mer, Sav, Hpo and Wts.

It is found in the cytoplasm. The protein localises to the apical cell membrane. Functionally, regulator of the Hippo/SWH (Sav/Wts/Hpo) signaling pathway, a signaling pathway that plays a pivotal role in organ size control and tumor suppression by restricting proliferation and promoting apoptosis. The core of this pathway is composed of a kinase cascade wherein Hippo (Hpo), in complex with its regulatory protein Salvador (Sav), phosphorylates and activates Warts (Wts) in complex with its regulatory protein Mats, which in turn phosphorylates and inactivates the Yorkie (Yki) oncoprotein. Kibra acts synergistically along with Ex and Mer to regulate the Hippo signaling pathway. In Drosophila virilis (Fruit fly), this protein is Protein kibra (Kibra).